Reading from the N-terminus, the 324-residue chain is Phospho-N-acetylmuramoyl-pentapeptide-transferase (324 aa).

10 consecutive transmembrane segments (helical) span residues 5–25 (GLLVTAGVAFLISVALSPLFI), 52–72 (PTMGGIVIYVSMMVTSLIMAI), 77–97 (LGAEVSLLLLVTFGYGLIGFL), 122–142 (VIAIAFFFIGKGQAFHTYIMI), 149–169 (FELGWAYFVLVLFMLIGGSNA), 176–196 (LDGLLSGTAAIAFGAFSIIAV), 201–221 (FGVAIFCMAVVGAVLGFLVFN), 227–247 (VFMGDTGSLALGGAIAAVAIL), 253–273 (LLVIIGGVFVMETLSVIIQVI), and 302–322 (VVVTFWSVGFLLAVLGIYIGV).

Belongs to the glycosyltransferase 4 family. MraY subfamily. Mg(2+) is required as a cofactor.

The protein localises to the cell membrane. The enzyme catalyses UDP-N-acetyl-alpha-D-muramoyl-L-alanyl-gamma-D-glutamyl-meso-2,6-diaminopimeloyl-D-alanyl-D-alanine + di-trans,octa-cis-undecaprenyl phosphate = di-trans,octa-cis-undecaprenyl diphospho-N-acetyl-alpha-D-muramoyl-L-alanyl-D-glutamyl-meso-2,6-diaminopimeloyl-D-alanyl-D-alanine + UMP. The protein operates within cell wall biogenesis; peptidoglycan biosynthesis. Functionally, catalyzes the initial step of the lipid cycle reactions in the biosynthesis of the cell wall peptidoglycan: transfers peptidoglycan precursor phospho-MurNAc-pentapeptide from UDP-MurNAc-pentapeptide onto the lipid carrier undecaprenyl phosphate, yielding undecaprenyl-pyrophosphoryl-MurNAc-pentapeptide, known as lipid I. This is Phospho-N-acetylmuramoyl-pentapeptide-transferase from Bacillus anthracis.